The following is a 464-amino-acid chain: Serine/threonine-protein kinase 38-like (464 aa).

Residue A2 is modified to N-acetylalanine. Residues 63–88 (KKLRRSQHARKETEFLRLKRTRLGLD) are S100B binding. T75 bears the Phosphothreonine mark. The Protein kinase domain occupies 90–383 (FESLKVIGRG…VEEIKGHPFF (294 aa)). ATP is bound by residues 96 to 104 (IGRGAFGEV) and K119. D213 (proton acceptor) is an active-site residue. The residue at position 282 (S282) is a Phosphoserine; by autocatalysis. Positions 384–453 (EGVDWEHIRE…KRFEGLTQRG (70 aa)) constitute an AGC-kinase C-terminal domain. T442 is modified (phosphothreonine; by STK24/MST3).

This sequence belongs to the protein kinase superfamily. AGC Ser/Thr protein kinase family. Homodimeric S100B binds two molecules of STK38L. Interacts with MICAL1; leading to inhibit the protein kinase activity by antagonizing activation by MST1/STK4. Interacts with MOB1 and MOB2. It depends on Mg(2+) as a cofactor. Ubiquitously expressed with highest levels observed in the thymus.

Its subcellular location is the cytoplasm. It localises to the cytoskeleton. The protein localises to the membrane. It catalyses the reaction L-seryl-[protein] + ATP = O-phospho-L-seryl-[protein] + ADP + H(+). It carries out the reaction L-threonyl-[protein] + ATP = O-phospho-L-threonyl-[protein] + ADP + H(+). Its activity is regulated as follows. Activated by binding of S100B which releases autoinhibitory N-lobe interactions, enabling ATP to bind and the autophosphorylation of Ser-282. Thr-442 then undergoes calcium-dependent phosphorylation by STK24/MST3. Interactions between phosphorylated Thr-442 and the N-lobe promote additional structural changes that complete the activation of the kinase. Autoinhibition is also released by the binding of MOB1/MOBKL1A and MOB2/HCCA2 to the N-terminal of STK38L. Involved in the regulation of structural processes in differentiating and mature neuronal cells. The protein is Serine/threonine-protein kinase 38-like of Homo sapiens (Human).